Here is a 345-residue protein sequence, read N- to C-terminus: Calcium uniporter regulatory subunit MCUb, mitochondrial (345 aa).

The transit peptide at 1–44 directs the protein to the mitochondrion; sequence MPGALSGRRMLPSGLCLGRWQLLRTIRARGRGDPRELPSTPQVL. Residues 188–221 adopt a coiled-coil conformation; sequence EIQKRRERHLMAKIDHLQEQLRPLEQVKAAIEAR. A run of 2 helical transmembrane segments spans residues 229–249 and 259–279; these read LLWA…WLTW and PVTF…FIIT. The stretch at 306–334 forms a coiled coil; the sequence is FDVEQYNKLKEDLAEATESLESVRRSLRL.

It belongs to the MCU (TC 1.A.77) family. Homooligomer. Associates with the uniplex complex, composed of MCU, MICU1, MICU2 and EMRE/SMDT1, inhibiting its activity. In terms of tissue distribution, detected in lung, brain and heart, and at lower levels in white fat, skeletal muscle and spleen. Detected at very low levels in kidney and liver. Highly expressed in macrophages during the progression of skeletal muscle regeneration.

It is found in the mitochondrion inner membrane. In terms of biological role, negative regulator of the mitochondrial calcium uniporter (MCU), a channel that mediates calcium uptake into the mitochondrial matrix. MCUB is required to limit mitochondrial calcium overload during stress. Acts as a dominant-negative regulator that displaces MCU from the functional uniplex complex and thereby decreases the association of calcium sensors MICU1 and MICU2, preventing channel gating. Mitochondrial calcium homeostasis plays key roles in mitochondrial metabolism. Acts as an important regulator of mitochondrial metabolism in response to stress in muscle cells: induced in response to fasting, leading to restrict mitochondrial calcium uptake, resulting in reprogramming of mitochondria toward fatty acid oxidation preference. Acts as a regulator of macrophage polarization during skeletal muscle regeneration: inhibition of mitochondrial calcium uptake drives differentiation of macrophages with anti-inflammatory profile, promoting the differentiation and fusion of satellite cells. In Mus musculus (Mouse), this protein is Calcium uniporter regulatory subunit MCUb, mitochondrial.